The chain runs to 215 residues: EGDRGASKNWKLSIRCGGYTLKVLTENKFLPEPPSTRKKRILESHNNTLVDPCEEHKKKNPDASVKFSEFLKKRSEMWKTIFAKEKGKFEDMAKADKAHYEREMKTYIPPKGEKKKKFKDPNAPKRPPLAFFLFCSEYRPKIKGEHPGLSIDDVVKKLAGMWNNTAASDKQFYEKKAAKLKEKYKKDIAACRAKGKPNSATKRVVKAEKSKKKKE.

The SAND domain occupies 1-31 (EGDRGASKNWKLSIRCGGYTLKVLTENKFLP). 2 consecutive DNA-binding regions (HMG box) follow at residues 32-108 (EPPS…KTYI) and 124-192 (PKRP…AACR). A Nuclear localization signal motif is present at residues 72–89 (KKRSEMWKTIFAKEKGKF). Disordered regions lie at residues 104–124 (MKTY…PNAP) and 193–215 (AKGK…KKKE).

Homodimer. Interacts with members of the HP1 family of nonhistone chromosomal protein, such as CBX5 and CBX3 via the PxVxL motif. Interacts with ETS1; the interaction is direct and modulates ETS1 transcriptional activity. Interacts with the MRN complex which is composed of two heterodimers RAD50/MRE11 associated with a single NBN; recruits the complex to PML-related bodies. Interacts with HIPK2; positively regulates TP53-dependent transcription. Interacts with CASP8AP2; may negatively regulate CASP8AP2 export from the nucleus to the cytoplasm. Post-translationally, phosphorylated. In terms of processing, sumoylated. Sumoylated with SUMO1. Sumoylation depends on a functional nuclear localization signal but is not necessary for nuclear import or nuclear body targeting. Sumoylation may stabilize the interaction with CBX5.

Its subcellular location is the nucleus. It is found in the PML body. It localises to the nuclear body. The protein resides in the cytoplasm. Its function is as follows. Together with PML, this tumor suppressor is a major constituent of the PML bodies, a subnuclear organelle involved in a large number of physiological processes including cell growth, differentiation and apoptosis. Functions as a transcriptional coactivator of ETS1 and ETS2. Under certain conditions, it may also act as a corepressor of ETS1 preventing its binding to DNA. Through the regulation of ETS1 it may play a role in angiogenesis, controlling endothelial cell motility and invasion. Through interaction with the MRN complex it may be involved in the regulation of telomeres lengthening. May also regulate TP53-mediated transcription and through CASP8AP2, regulate FAS-mediated apoptosis. May also play a role in infection by viruses through mechanisms that may involve chromatin and/or transcriptional regulation. The chain is Nuclear autoantigen Sp-100 (SP100) from Pan troglodytes (Chimpanzee).